The chain runs to 182 residues: Large ribosomal subunit protein uL5 (182 aa).

This sequence belongs to the universal ribosomal protein uL5 family. As to quaternary structure, part of the 50S ribosomal subunit; part of the 5S rRNA/L5/L18/L25 subcomplex. Contacts the 5S rRNA and the P site tRNA. Forms a bridge to the 30S subunit in the 70S ribosome.

Its function is as follows. This is one of the proteins that bind and probably mediate the attachment of the 5S RNA into the large ribosomal subunit, where it forms part of the central protuberance. In the 70S ribosome it contacts protein S13 of the 30S subunit (bridge B1b), connecting the 2 subunits; this bridge is implicated in subunit movement. Contacts the P site tRNA; the 5S rRNA and some of its associated proteins might help stabilize positioning of ribosome-bound tRNAs. The polypeptide is Large ribosomal subunit protein uL5 (Nostoc punctiforme (strain ATCC 29133 / PCC 73102)).